The chain runs to 406 residues: MSFSLQQIRSDFPVLTREVNGQPLAYLDSAASAQKPTAVIEAEAEFYRHGYAAVHRGIHTLSADATQRMEAVRTRAAQFINARLPEEIVFVRGTTEGINLVANSWGDSQLHAGDNLIVTAMEHHANIVPWQMLCARTGAELRVLPINQDGTLQLDKLPSLMDERTRLLAVTHVSNVLGTENPIADIIATAHQAGVKVLVDGAQAVMHHKVDVQALDCDFYLFSGHKLYGPTGIGILYAKEEILQAMPPWEGGGAMIATVSLTEGTTWAAAPWRFEAGTPNTGGIIALGAAMDYVDAIGLENIHDYERTLMAYVLRELQAVPDLQIYGPQERLGVIAFNLGKHHAYDVGSFLDNYGIAVRTGHHCAMPLMEFYGVPAMCRASLAMYNTEDEVDRLVAGLIRIHRLLG.

The residue at position 226 (Lys226) is an N6-(pyridoxal phosphate)lysine. Residue Cys364 is the Cysteine persulfide intermediate of the active site.

Belongs to the class-V pyridoxal-phosphate-dependent aminotransferase family. Csd subfamily. Homodimer. Interacts with SufE and the SufBCD complex composed of SufB, SufC and SufD. The interaction with SufE is required to mediate the direct transfer of the sulfur atom from the S-sulfanylcysteine. Requires pyridoxal 5'-phosphate as cofactor.

The protein localises to the cytoplasm. It carries out the reaction (sulfur carrier)-H + L-cysteine = (sulfur carrier)-SH + L-alanine. The catalysed reaction is L-selenocysteine + AH2 = hydrogenselenide + L-alanine + A + H(+). Its pathway is cofactor biosynthesis; iron-sulfur cluster biosynthesis. Cysteine desulfurases mobilize the sulfur from L-cysteine to yield L-alanine, an essential step in sulfur metabolism for biosynthesis of a variety of sulfur-containing biomolecules. Component of the suf operon, which is activated and required under specific conditions such as oxidative stress and iron limitation. Acts as a potent selenocysteine lyase in vitro, that mobilizes selenium from L-selenocysteine. Selenocysteine lyase activity is however unsure in vivo. This chain is Cysteine desulfurase, found in Cronobacter sakazakii (strain ATCC BAA-894) (Enterobacter sakazakii).